Reading from the N-terminus, the 617-residue chain is Elongation factor 4 (617 aa).

The tr-type G domain maps to 17-203 (ERIRNFCIIA…RVCELVPHPV (187 aa)). GTP is bound by residues 29 to 34 (DHGKST) and 150 to 153 (NKID).

It belongs to the TRAFAC class translation factor GTPase superfamily. Classic translation factor GTPase family. LepA subfamily.

The protein resides in the cell membrane. It catalyses the reaction GTP + H2O = GDP + phosphate + H(+). Its function is as follows. Required for accurate and efficient protein synthesis under certain stress conditions. May act as a fidelity factor of the translation reaction, by catalyzing a one-codon backward translocation of tRNAs on improperly translocated ribosomes. Back-translocation proceeds from a post-translocation (POST) complex to a pre-translocation (PRE) complex, thus giving elongation factor G a second chance to translocate the tRNAs correctly. Binds to ribosomes in a GTP-dependent manner. This Corynebacterium urealyticum (strain ATCC 43042 / DSM 7109) protein is Elongation factor 4.